A 74-amino-acid chain; its full sequence is Large ribosomal subunit protein bL27c (74 aa).

It belongs to the bacterial ribosomal protein bL27 family.

The protein localises to the plastid. It is found in the chloroplast. The protein is Large ribosomal subunit protein bL27c (rpl27) of Pleurochrysis haptonemofera (Unicellular marine alga).